The primary structure comprises 693 residues: Glycine--tRNA ligase beta subunit (693 aa).

Belongs to the class-II aminoacyl-tRNA synthetase family. As to quaternary structure, tetramer of two alpha and two beta subunits.

It localises to the cytoplasm. It catalyses the reaction tRNA(Gly) + glycine + ATP = glycyl-tRNA(Gly) + AMP + diphosphate. In Vibrio vulnificus (strain YJ016), this protein is Glycine--tRNA ligase beta subunit.